Reading from the N-terminus, the 457-residue chain is G-protein coupled receptor 135 (457 aa).

A disordered region spans residues 1 to 27; it reads MEEQARPPSRPAASATLPGSAHPGGAA. At 1-64 the chain is on the extracellular side; the sequence is MEEQARPPSR…EAAGSRGPAP (64 aa). The N-linked (GlcNAc...) asparagine glycan is linked to Asn-47. Residues 65–85 form a helical membrane-spanning segment; sequence LLWHGAAVAAQALVLLLIFLL. The Cytoplasmic portion of the chain corresponds to 86-109; that stretch reads SSLGNCAVMGVIVKHRQLRTVTNA. A helical transmembrane segment spans residues 110–130; the sequence is FILSLSLSDLLTALLCLPAAF. Topologically, residues 131–156 are extracellular; it reads LDLFAPPGDSGPWRSFCAASRFFSSC. A helical transmembrane segment spans residues 157–177; it reads FGIVSTFSVALISLDRYCAIV. Topologically, residues 178 to 189 are cytoplasmic; sequence RPPRDKLGRRRA. Residues 190–210 form a helical membrane-spanning segment; it reads LQLLAGAWLAALGFSLPWELL. Residues 211 to 235 lie on the Extracellular side of the membrane; it reads RAPREPPTPQSFHRCLYRTSPDPAQ. Residues 236–256 traverse the membrane as a helical segment; it reads LGAAYSVGLVVACYLLPFLLM. Residues 257 to 295 are Cytoplasmic-facing; it reads CFCRYHICKTVRLSDVRVRPMTTYARVLRFFSEVRTATT. Residues 296–316 form a helical membrane-spanning segment; the sequence is VLIMIVFVICCWGPYCFLVLL. The Extracellular portion of the chain corresponds to 317–329; that stretch reads AATRQGQTTQAPS. A helical transmembrane segment spans residues 330 to 350; that stretch reads LLNVAAVWLTWANGAINPVIY. The Cytoplasmic portion of the chain corresponds to 351 to 457; sequence AIRNPNISMF…HKSETRDSSI (107 aa).

This sequence belongs to the G-protein coupled receptor 1 family. In terms of assembly, interacts with MTNR1B. Interacts with ARRB1 and ARRB2 in a spontaneous and agonist-independent manner; leading to the internalization of GPR135 in the endosomal compartment.

The protein localises to the cell membrane. Its subcellular location is the endosome membrane. Orphan receptor. Has spontaneous activity for beta-arrestin recruitment. Shows a reciprocal regulatory interaction with the melatonin receptor MTNR1B most likely through receptor heteromerization. This is G-protein coupled receptor 135 (Gpr135) from Rattus norvegicus (Rat).